A 602-amino-acid chain; its full sequence is MSNTSSYEKNNPDNLKHNGITIDSEFLTQEPITIPSNGSAVSIDETGSGSKWQDFKDSFKRVKPIEVDPNLSEAEKVAIITAQTPLKHHLKNRHLQMIAIGGAIGTGLLVGSGTALRTGGPASLLIGWGSTGTMIYAMVMALGELAVIFPISGGFTTYATRFIDESFGYANNFNYMLQWLVVLPLEIVSASITVNFWGTDPKYRDGFVALFWLAIVIINMFGVKGYGEAEFVFSFIKVITVVGFIILGIILNCGGGPTGGYIGGKYWHDPGAFAGDTPGAKFKGVCSVFVTAAFSFAGSELVGLAASESVEPRKSVPKAAKQVFWRITLFYILSLLMIGLLVPYNDKSLIGASSVDAAASPFVIAIKTHGIKGLPSVVNVVILIAVLSVGNSAIYACSRTMVALAEQRFLPEIFSYVDRKGRPLVGIAVTSAFGLIAFVAASKKEGEVFNWLLALSGLSSLFTWGGICICHIRFRKALAAQGRGLDELSFKSPTGVWGSYWGLFMVIIMFIAQFYVAVFPVGDSPSAEGFFEAYLSFPLVMVMYIGHKIYKRNWKLFIPAEKMDIDTGRREVDLDLLKQEIAEEKAIMATKPRWYRIWNFWC.

Residues 1 to 95 (MSNTSSYEKN…LKHHLKNRHL (95 aa)) lie on the Cytoplasmic side of the membrane. A Glycyl lysine isopeptide (Lys-Gly) (interchain with G-Cter in ubiquitin) cross-link involves residue Lys76. A helical membrane pass occupies residues 96–116 (QMIAIGGAIGTGLLVGSGTAL). Residues 117-121 (RTGGP) are Extracellular-facing. The helical transmembrane segment at 122-142 (ASLLIGWGSTGTMIYAMVMAL) threads the bilayer. At 143-165 (GELAVIFPISGGFTTYATRFIDE) the chain is on the cytoplasmic side. The chain crosses the membrane as a helical span at residues 166-185 (SFGYANNFNYMLQWLVVLPL). Residues 186–204 (EIVSASITVNFWGTDPKYR) lie on the Extracellular side of the membrane. A helical membrane pass occupies residues 205–224 (DGFVALFWLAIVIINMFGVK). Residues 225-237 (GYGEAEFVFSFIK) are Cytoplasmic-facing. A helical membrane pass occupies residues 238-256 (VITVVGFIILGIILNCGGG). The Extracellular portion of the chain corresponds to 257–280 (PTGGYIGGKYWHDPGAFAGDTPGA). A helical transmembrane segment spans residues 281–298 (KFKGVCSVFVTAAFSFAG). Over 299–321 (SELVGLAASESVEPRKSVPKAAK) the chain is Cytoplasmic. The chain crosses the membrane as a helical span at residues 322–342 (QVFWRITLFYILSLLMIGLLV). Residues 343–376 (PYNDKSLIGASSVDAAASPFVIAIKTHGIKGLPS) are Extracellular-facing. The chain crosses the membrane as a helical span at residues 377-396 (VVNVVILIAVLSVGNSAIYA). The Cytoplasmic portion of the chain corresponds to 397–421 (CSRTMVALAEQRFLPEIFSYVDRKG). A helical membrane pass occupies residues 422–442 (RPLVGIAVTSAFGLIAFVAAS). At 443–451 (KKEGEVFNW) the chain is on the extracellular side. A helical membrane pass occupies residues 452-472 (LLALSGLSSLFTWGGICICHI). Topologically, residues 473-491 (RFRKALAAQGRGLDELSFK) are cytoplasmic. The helical transmembrane segment at 492–510 (SPTGVWGSYWGLFMVIIMF) threads the bilayer. The Extracellular segment spans residues 511–529 (IAQFYVAVFPVGDSPSAEG). A helical transmembrane segment spans residues 530-548 (FFEAYLSFPLVMVMYIGHK). Residues 549–602 (IYKRNWKLFIPAEKMDIDTGRREVDLDLLKQEIAEEKAIMATKPRWYRIWNFWC) are Cytoplasmic-facing.

It belongs to the amino acid-polyamine-organocation (APC) superfamily. YAT (TC 2.A.3.10) family. In terms of processing, active permease is phosphorylated. The addition of glutamine causes rapid dephosphorylation and inactivation of the permease. Ubiquitination by RSP5 and the RSP5-associated proteins BUL1 and BUL2, leads the addition of poly-ubiquitin chains being specifically formed by linkage through the lysine 63 residue of ubiquitin and mediates ammonium-induced endocytosis and degradation in the vacuole.

It localises to the cell membrane. The protein localises to the endoplasmic reticulum membrane. In terms of biological role, general amino-acid permease involved in the uptake of all the naturally occurring L-amino-acids, related compounds such as ornithine and citrulline, some D-amino acids, toxic amino acid analogs such as azetidine-2-carboxylate, and the polyamines putrescine and spermidine. Senses its transport substrates to set an appropriate level of transporter activity at the cell surface. Required for FLO11 expression and invasive growth. In Saccharomyces cerevisiae (strain ATCC 204508 / S288c) (Baker's yeast), this protein is General amino-acid permease GAP1.